Reading from the N-terminus, the 500-residue chain is Cholesterol 24-hydroxylase (500 aa).

A helical transmembrane segment spans residues 3-23 (PGLLLLGSAVLLAFGLCCTFV). Cys437 contributes to the heme binding site.

This sequence belongs to the cytochrome P450 family. Heme is required as a cofactor. In terms of tissue distribution, expressed in high level in the pyramidal cells of the hippocampus, Purkinje cells of the cerebellum, and neuronal cell bodies in layers II/III, V, and VI of the cortex. Expressed in hippocampal and cerebellar interneurons, in retinal ganglion cells, and in a subset of retinal cells localized to the inner nuclear layer (at protein level).

The protein localises to the endoplasmic reticulum membrane. It localises to the microsome membrane. Its subcellular location is the postsynapse. It is found in the presynapse. The protein resides in the cell projection. The protein localises to the dendrite. The enzyme catalyses cholesterol + reduced [NADPH--hemoprotein reductase] + O2 = (24S)-hydroxycholesterol + oxidized [NADPH--hemoprotein reductase] + H2O + H(+). It carries out the reaction cholestanol + reduced [NADPH--hemoprotein reductase] + O2 = (24S)-hydroxycholestanol + oxidized [NADPH--hemoprotein reductase] + H2O + H(+). It catalyses the reaction 7-dehydrocholesterol + reduced [NADPH--hemoprotein reductase] + O2 = cholesta-5,7-dien-3beta,24S-diol + oxidized [NADPH--hemoprotein reductase] + H2O + H(+). The catalysed reaction is 7-dehydrocholesterol + reduced [NADPH--hemoprotein reductase] + O2 = cholesta-5,7-dien-3beta,25-diol + oxidized [NADPH--hemoprotein reductase] + H2O + H(+). The enzyme catalyses desmosterol + reduced [NADPH--hemoprotein reductase] + O2 = (24Z),26-hydroxydesmosterol + oxidized [NADPH--hemoprotein reductase] + H2O + H(+). It carries out the reaction desmosterol + reduced [NADPH--hemoprotein reductase] + O2 = (24S)-25-epoxycholesterol + oxidized [NADPH--hemoprotein reductase] + H2O + H(+). It catalyses the reaction 4beta-hydroxycholesterol + reduced [NADPH--hemoprotein reductase] + O2 = 4beta,24S-dihydroxycholesterol + oxidized [NADPH--hemoprotein reductase] + H2O + H(+). The catalysed reaction is (24S)-hydroxycholesterol + reduced [NADPH--hemoprotein reductase] + O2 = (24S,25R)-24,26-dihydroxycholesterol + oxidized [NADPH--hemoprotein reductase] + H2O + H(+). The enzyme catalyses (24S)-hydroxycholesterol + reduced [NADPH--hemoprotein reductase] + O2 = 24S,25-dihydroxycholesterol + oxidized [NADPH--hemoprotein reductase] + H2O + H(+). It carries out the reaction 7alpha-hydroxycholesterol + reduced [NADPH--hemoprotein reductase] + O2 = (24S)-7alpha-dihydroxycholesterol + oxidized [NADPH--hemoprotein reductase] + H2O + H(+). It catalyses the reaction progesterone + reduced [NADPH--hemoprotein reductase] + O2 = 17alpha-hydroxyprogesterone + oxidized [NADPH--hemoprotein reductase] + H2O + H(+). The catalysed reaction is testosterone + reduced [NADPH--hemoprotein reductase] + O2 = 16beta,17beta-dihydroxyandrost-4-en-3-one + oxidized [NADPH--hemoprotein reductase] + H2O + H(+). The enzyme catalyses testosterone + reduced [NADPH--hemoprotein reductase] + O2 = 2-hydroxytestosterone + oxidized [NADPH--hemoprotein reductase] + H2O + H(+). It carries out the reaction testosterone + reduced [NADPH--hemoprotein reductase] + O2 = 6beta,17beta-dihydroxyandrost-4-en-3-one + oxidized [NADPH--hemoprotein reductase] + H2O + H(+). It functions in the pathway steroid metabolism; cholesterol degradation. Its pathway is lipid metabolism; C21-steroid hormone metabolism. Functionally, P450 monooxygenase that plays a major role in cholesterol homeostasis in the brain. Primarily catalyzes the hydroxylation (with S stereochemistry) at C-24 of cholesterol side chain, triggering cholesterol diffusion out of neurons and its further degradation. By promoting constant cholesterol elimination in neurons, may activate the mevalonate pathway and coordinate the synthesis of new cholesterol and nonsterol isoprenoids involved in synaptic activity and learning. Further hydroxylates cholesterol derivatives and hormone steroids on both the ring and side chain of these molecules, converting them into active oxysterols involved in lipid signaling and biosynthesis. Acts as an epoxidase converting cholesta-5,24-dien-3beta-ol/desmosterol into (24S),25-epoxycholesterol, an abundant lipid ligand of nuclear NR1H2 and NR1H3 receptors shown to promote neurogenesis in developing brain. May also catalyze the oxidative metabolism of xenobiotics, such as clotrimazole. This is Cholesterol 24-hydroxylase from Mus musculus (Mouse).